The sequence spans 451 residues: Phosphoglucosamine mutase (451 aa).

S102 acts as the Phosphoserine intermediate in catalysis. Residues S102, D242, D244, and D246 each contribute to the Mg(2+) site. At S102 the chain carries Phosphoserine.

The protein belongs to the phosphohexose mutase family. Mg(2+) is required as a cofactor. Activated by phosphorylation.

The enzyme catalyses alpha-D-glucosamine 1-phosphate = D-glucosamine 6-phosphate. Functionally, catalyzes the conversion of glucosamine-6-phosphate to glucosamine-1-phosphate. In Staphylococcus aureus (strain bovine RF122 / ET3-1), this protein is Phosphoglucosamine mutase.